Reading from the N-terminus, the 223-residue chain is Probable transaldolase (223 aa).

Residue K92 is the Schiff-base intermediate with substrate of the active site.

The protein belongs to the transaldolase family. Type 3B subfamily.

The protein localises to the cytoplasm. The catalysed reaction is D-sedoheptulose 7-phosphate + D-glyceraldehyde 3-phosphate = D-erythrose 4-phosphate + beta-D-fructose 6-phosphate. Its pathway is carbohydrate degradation; pentose phosphate pathway; D-glyceraldehyde 3-phosphate and beta-D-fructose 6-phosphate from D-ribose 5-phosphate and D-xylulose 5-phosphate (non-oxidative stage): step 2/3. Functionally, transaldolase is important for the balance of metabolites in the pentose-phosphate pathway. The sequence is that of Probable transaldolase from Thermus thermophilus (strain ATCC 27634 / DSM 579 / HB8).